Here is a 522-residue protein sequence, read N- to C-terminus: Sensory neuron membrane protein 1 (522 aa).

The Cytoplasmic portion of the chain corresponds to 1–11; it reads MKLPKHLKFAA. Residues 12–32 form a helical membrane-spanning segment; sequence GAGGAFLFGILFGWVMFPAIL. Residues 33 to 455 are Extracellular-facing; it reads KGQLKKEMAL…KFQLFYPKKA (423 aa). N-linked (GlcNAc...) asparagine glycans are attached at residues asparagine 67 and asparagine 229. 3 disulfides stabilise this stretch: cysteine 268–cysteine 333, cysteine 297–cysteine 350, and cysteine 335–cysteine 339. Residue asparagine 438 is glycosylated (N-linked (GlcNAc...) asparagine). A helical transmembrane segment spans residues 456 to 476; sequence VGVIKWLLVTFGGFGLIGCTI. Topologically, residues 477-522 are cytoplasmic; the sequence is YHYKDRIMSFASSPGSAAVTKVKPEEVEQKDVSVIGQPQEPAKINM.

Belongs to the CD36 family.

The protein localises to the cell membrane. Plays an olfactory role that is not restricted to pheromone sensitivity. The chain is Sensory neuron membrane protein 1 from Plutella xylostella (Diamondback moth).